The primary structure comprises 211 residues: CASP-like protein 3A1 (211 aa).

Residues 1-45 (MGSIGNGRSDSVVGIQMPPAGSKMVLEPEALQVTTSPVPRWPRLG) lie on the Cytoplasmic side of the membrane. The chain crosses the membrane as a helical span at residues 46–66 (VVMVATRAVAMVMALLSMSLM). The Extracellular segment spans residues 67–95 (VSSKQRGILTIFGIEIPLDANWSFSYSLQ). Residue Asn-87 is glycosylated (N-linked (GlcNAc...) asparagine). A helical membrane pass occupies residues 96 to 116 (FLVAMSTASAAYSLAQLLLIA). Topologically, residues 117–131 (HKAVKKSPIVPSRRH) are cytoplasmic. The helical transmembrane segment at 132-152 (AWLLFAGDQVFSLAMMSAGSA) threads the bilayer. Over 153 to 186 (AAAVANLNRTGIRHTALPNFCKPLPRFCDLSAVS) the chain is Extracellular. N-linked (GlcNAc...) asparagine glycosylation occurs at Asn-160. A helical transmembrane segment spans residues 187-207 (IACAFLSCVFLAASAVIDVIW). Over 208–211 (LSSP) the chain is Cytoplasmic.

This sequence belongs to the Casparian strip membrane proteins (CASP) family. In terms of assembly, homodimer and heterodimers.

It localises to the cell membrane. The protein is CASP-like protein 3A1 of Sorghum bicolor (Sorghum).